Reading from the N-terminus, the 452-residue chain is Transcription factor ETV6 (452 aa).

A compositionally biased stretch (polar residues) spans 1-10 (MSETPAQCSI). The interval 1-30 (MSETPAQCSIKQERISYTPPESPVPSYASS) is disordered. Lys-11 is subject to N6-acetyllysine; alternate. Lys-11 is covalently cross-linked (Glycyl lysine isopeptide (Lys-Gly) (interchain with G-Cter in SUMO2); alternate). At Thr-18 the chain carries Phosphothreonine. Position 22 is a phosphoserine (Ser-22). The PNT domain maps to 40-124 (ALRMEEDSIR…ELLQHILKQR (85 aa)). Residues 158–262 (VQRTPRPSVD…PKPSSPRQES (105 aa)) are disordered. A phosphoserine mark is found at Ser-213 and Ser-238. The span at 230–250 (QESYPLSVSPMENNHCPASSE) shows a compositional bias: polar residues. At Ser-257 the chain carries Phosphoserine; by MAPK14. A Glycyl lysine isopeptide (Lys-Gly) (interchain with G-Cter in SUMO2) cross-link involves residue Lys-288. The residue at position 302 (Lys-302) is an N6-acetyllysine; alternate. Lys-302 participates in a covalent cross-link: Glycyl lysine isopeptide (Lys-Gly) (interchain with G-Cter in SUMO2); alternate. Ser-323 carries the phosphoserine modification. A DNA-binding region (ETS) is located at residues 339-420 (RLLWDYVYQL…PGQRLLFRFM (82 aa)). Glycyl lysine isopeptide (Lys-Gly) (interchain with G-Cter in SUMO2) cross-links involve residues Lys-403 and Lys-421.

This sequence belongs to the ETS family. In terms of assembly, can form homodimers or heterodimers with TEL2 or FLI1. Interacts with L3MBTL1 and HDAC9. Post-translationally, phosphorylation of Ser-257 by MAPK14 (p38) inhibits ETV6 transcriptional repression. As to expression, ubiquitous.

The protein localises to the nucleus. In terms of biological role, transcriptional repressor; binds to the DNA sequence 5'-CCGGAAGT-3'. Plays a role in hematopoiesis and malignant transformation. The chain is Transcription factor ETV6 (ETV6) from Homo sapiens (Human).